A 73-amino-acid chain; its full sequence is Conotoxin Im14.3 (73 aa).

Residues 1 to 17 form the signal peptide; it reads MGVFRCCLAAALVVVCL. The propeptide occupies 18-35; the sequence is SRMGGTEPLESNHEDERR. A disordered region spans residues 22-42; the sequence is GTEPLESNHEDERRADDTSGD. Basic and acidic residues predominate over residues 27–38; the sequence is ESNHEDERRADD. The region spanning 44–73 is the ShKT domain; it reads CVDTNEDCVNWASTGQCEANPSYMRENCRK.

In terms of processing, contain 2 disulfide bonds. In terms of tissue distribution, expressed by the venom duct.

It is found in the secreted. Probable neurotoxin. The protein is Conotoxin Im14.3 of Conus imperialis (Imperial cone).